The primary structure comprises 374 residues: Probable tRNA pseudouridine synthase D (374 aa).

The active-site Nucleophile is aspartate 81. The TRUD domain occupies 141 to 340; the sequence is VFPNYFDVQR…RKGFQKMYDL (200 aa).

The protein belongs to the pseudouridine synthase TruD family.

The catalysed reaction is uridine(13) in tRNA = pseudouridine(13) in tRNA. Functionally, could be responsible for synthesis of pseudouridine from uracil-13 in transfer RNAs. This is Probable tRNA pseudouridine synthase D from Nanoarchaeum equitans (strain Kin4-M).